Consider the following 300-residue polypeptide: N-acetylmannosamine kinase (300 aa).

Residues 5 to 12 and 132 to 139 each bind ATP; these read ALDIGGTK and GVGGGIVL. Zn(2+)-binding residues include His-156, Cys-166, Cys-168, and Cys-173.

Belongs to the ROK (NagC/XylR) family. NanK subfamily. As to quaternary structure, homodimer.

It catalyses the reaction an N-acyl-D-mannosamine + ATP = an N-acyl-D-mannosamine 6-phosphate + ADP + H(+). It functions in the pathway amino-sugar metabolism; N-acetylneuraminate degradation; D-fructose 6-phosphate from N-acetylneuraminate: step 2/5. Functionally, catalyzes the phosphorylation of N-acetylmannosamine (ManNAc) to ManNAc-6-P. The protein is N-acetylmannosamine kinase of Haemophilus influenzae (strain 86-028NP).